A 286-amino-acid chain; its full sequence is Ribosomal RNA small subunit methyltransferase I (286 aa).

This sequence belongs to the methyltransferase superfamily. RsmI family.

It localises to the cytoplasm. It catalyses the reaction cytidine(1402) in 16S rRNA + S-adenosyl-L-methionine = 2'-O-methylcytidine(1402) in 16S rRNA + S-adenosyl-L-homocysteine + H(+). Functionally, catalyzes the 2'-O-methylation of the ribose of cytidine 1402 (C1402) in 16S rRNA. In Escherichia coli O157:H7, this protein is Ribosomal RNA small subunit methyltransferase I.